The sequence spans 191 residues: Photosystem I assembly protein Ycf4 (191 aa).

A run of 2 helical transmembrane segments spans residues 34–54 and 68–88; these read VASM…SSYF and IFVP…LLAI.

Belongs to the Ycf4 family.

It is found in the cellular thylakoid membrane. Seems to be required for the assembly of the photosystem I complex. This is Photosystem I assembly protein Ycf4 from Prochlorococcus marinus (strain NATL2A).